Here is a 289-residue protein sequence, read N- to C-terminus: MYG1 protein TC_0665 (289 aa).

It belongs to the MYG1 family.

The protein is MYG1 protein TC_0665 of Chlamydia muridarum (strain MoPn / Nigg).